The following is a 96-amino-acid chain: Prokineticin Bm8-a (96 aa).

Residues 1 to 19 (MKCFAQIVVLLLVIAFSHG) form the signal peptide. Cystine bridges form between Cys-26–Cys-38, Cys-32–Cys-50, Cys-37–Cys-78, Cys-60–Cys-86, and Cys-80–Cys-95.

The protein belongs to the AVIT (prokineticin) family. In terms of tissue distribution, expressed by the skin glands.

It is found in the secreted. Potent agonist for both PKR1/PROKR1 and PKR2/PROKR2, and inducer of a potent and long-lasting hyperalgesia. Also potentiates capsaicin-induced TRPV1 current, when tested on DRG neurons. At subnanomolar concentrations, this protein both induces potent chemotaxis of macrophages and stimulates LPS-induced production of the pro-inflammatory cytokines IL-1 and IL-12. In vivo, potently stimulates the contraction of the guinea-pig gastrointestinal (GI) smooth muscle (nanomolar concentration). The sequence is that of Prokineticin Bm8-a from Bombina maxima (Giant fire-bellied toad).